A 162-amino-acid chain; its full sequence is MGIASAVNSLLLKEFAAAFVVTMRYFFKPKPTVNYPFEKNPISPRFRGEHALRRYPNGEERCIACKLCEAICPAQAITIEAGPRRNDGTRRTVRYDIDMVKCIYCGLCQEACPVDAIVEGPNFEFATETREELYYDKARLLANGDRWEREIARNIEQDAPYR.

4Fe-4S ferredoxin-type domains follow at residues 52-82 (LRRY…IEAG) and 93-122 (VRYD…EGPN). 8 residues coordinate [4Fe-4S] cluster: C62, C65, C68, C72, C102, C105, C108, and C112.

The protein belongs to the complex I 23 kDa subunit family. As to quaternary structure, NDH-1 is composed of 14 different subunits. Subunits NuoA, H, J, K, L, M, N constitute the membrane sector of the complex. It depends on [4Fe-4S] cluster as a cofactor.

The protein resides in the cell inner membrane. The enzyme catalyses a quinone + NADH + 5 H(+)(in) = a quinol + NAD(+) + 4 H(+)(out). Functionally, NDH-1 shuttles electrons from NADH, via FMN and iron-sulfur (Fe-S) centers, to quinones in the respiratory chain. The immediate electron acceptor for the enzyme in this species is believed to be ubiquinone. Couples the redox reaction to proton translocation (for every two electrons transferred, four hydrogen ions are translocated across the cytoplasmic membrane), and thus conserves the redox energy in a proton gradient. This Afipia carboxidovorans (strain ATCC 49405 / DSM 1227 / KCTC 32145 / OM5) (Oligotropha carboxidovorans) protein is NADH-quinone oxidoreductase subunit I.